A 283-amino-acid chain; its full sequence is Nucleotide-binding protein THEYE_A0235 (283 aa).

Residue 12–19 (GLSGGGKT) coordinates ATP. Residue 62 to 65 (DIRV) coordinates GTP.

The protein belongs to the RapZ-like family.

In terms of biological role, displays ATPase and GTPase activities. The chain is Nucleotide-binding protein THEYE_A0235 from Thermodesulfovibrio yellowstonii (strain ATCC 51303 / DSM 11347 / YP87).